A 249-amino-acid chain; its full sequence is Precorrin-4 C(11)-methyltransferase (249 aa).

The protein belongs to the precorrin methyltransferase family.

It carries out the reaction precorrin-4 + S-adenosyl-L-methionine = precorrin-5 + S-adenosyl-L-homocysteine. The protein operates within cofactor biosynthesis; adenosylcobalamin biosynthesis; cob(II)yrinate a,c-diamide from precorrin-2 (aerobic route): step 4/10. In terms of biological role, catalyzes the methylation of C-11 in precorrin-4 to form precorrin-5. The protein is Precorrin-4 C(11)-methyltransferase (cobM) of Rhodococcus erythropolis (Arthrobacter picolinophilus).